A 1055-amino-acid chain; its full sequence is Cellulose synthase A catalytic subunit 9 [UDP-forming] (1055 aa).

At 1–268 the chain is on the cytoplasmic side; the sequence is MEASAGLVAG…ASSKVNPYRM (268 aa). The Zn(2+) site is built by C37, C40, C56, C59, C64, C67, C79, and C82. An RING-type; degenerate zinc finger spans residues 37-83; sequence CEICGDEVGRTVDGDLFVACNECGFPVCRPCYEYERREGTQNCPQCK. Residues 269–289 form a helical membrane-spanning segment; sequence VIILRLVVLGFFLRYRILHPV. Residues 290–291 are Extracellular-facing; it reads PD. A helical transmembrane segment spans residues 292–312; it reads AIPLWLTSIICEIWFAVSWIL. Residues 313–831 are Cytoplasmic-facing; sequence DQFPKWYPID…LERFSYINTT (519 aa). S351, K357, E358, and D387 together coordinate UDP-alpha-D-glucose. D387 is a catalytic residue. Residues 439 to 468 are a coiled coil; it reads NFVQERRAMKREYEEFKVRINALVAKAQKV. K528 is a UDP-alpha-D-glucose binding site. The Mn(2+) site is built by K529 and D553. D753 is an active-site residue. The helical transmembrane segment at 832 to 852 threads the bilayer; the sequence is IYPFTSLPLLAYCTLPAVCLL. Over 853–860 the chain is Extracellular; sequence TGKFIMPP. A helical transmembrane segment spans residues 861-881; it reads ISTFASLFFIALFISIFATGI. At 882 to 899 the chain is on the cytoplasmic side; it reads LEMRWSGVSIEEWWRNEQ. A helical membrane pass occupies residues 900–920; that stretch reads FWVIGGVSAHLFAVVQGLLKV. The Extracellular portion of the chain corresponds to 921 to 951; that stretch reads LAGIDTNFTVTSKATGDEDDEFAELYAFKWT. The N-linked (GlcNAc...) asparagine glycan is linked to N927. The helical transmembrane segment at 952–972 threads the bilayer; that stretch reads TLLIPPTTLLILNIIGVVAGV. The Cytoplasmic portion of the chain corresponds to 973–983; that stretch reads SDAINNGSEAW. Residues 984-1004 form a helical membrane-spanning segment; the sequence is GPLFGKLFFAFWVIVHLYPFL. Residues 1005–1013 are Extracellular-facing; that stretch reads KGLMGRQNR. A helical membrane pass occupies residues 1014 to 1034; the sequence is TPTIVVIWSVLLASIFSLLWV. Residues 1035 to 1055 are Cytoplasmic-facing; it reads RIDPFTIKARGPDVRQCGINC.

This sequence belongs to the glycosyltransferase 2 family. Plant cellulose synthase subfamily. Requires Mn(2+) as cofactor. It depends on Zn(2+) as a cofactor.

The protein resides in the cell membrane. It carries out the reaction [(1-&gt;4)-beta-D-glucosyl](n) + UDP-alpha-D-glucose = [(1-&gt;4)-beta-D-glucosyl](n+1) + UDP + H(+). The protein operates within glycan metabolism; plant cellulose biosynthesis. Catalytic subunit of cellulose synthase terminal complexes ('rosettes'), required for beta-1,4-glucan microfibril crystallization, a major mechanism of the cell wall formation. Involved in the secondary cell wall formation. In Oryza sativa subsp. indica (Rice), this protein is Cellulose synthase A catalytic subunit 9 [UDP-forming] (CESA9).